Here is a 459-residue protein sequence, read N- to C-terminus: Ribosomal protein uS12 methylthiotransferase RimO (459 aa).

The 116-residue stretch at 11 to 126 (PKVGMVSLGC…VMQAVHSHLP (116 aa)) folds into the MTTase N-terminal domain. [4Fe-4S] cluster is bound by residues C20, C56, C85, C157, C161, and C164. One can recognise a Radical SAM core domain in the interval 143–388 (LTPRHYAYLK…MEVAEEVSAA (246 aa)). The 69-residue stretch at 391 to 459 (ARKVGKTLKV…ADGHDLWGEV (69 aa)) folds into the TRAM domain.

It belongs to the methylthiotransferase family. RimO subfamily. [4Fe-4S] cluster is required as a cofactor.

Its subcellular location is the cytoplasm. It carries out the reaction L-aspartate(89)-[ribosomal protein uS12]-hydrogen + (sulfur carrier)-SH + AH2 + 2 S-adenosyl-L-methionine = 3-methylsulfanyl-L-aspartate(89)-[ribosomal protein uS12]-hydrogen + (sulfur carrier)-H + 5'-deoxyadenosine + L-methionine + A + S-adenosyl-L-homocysteine + 2 H(+). In terms of biological role, catalyzes the methylthiolation of an aspartic acid residue of ribosomal protein uS12. The chain is Ribosomal protein uS12 methylthiotransferase RimO from Burkholderia pseudomallei (strain K96243).